Reading from the N-terminus, the 788-residue chain is DNA replication helicase (788 aa).

73-80 serves as a coordination point for ATP; sequence GTAGAGKS.

This sequence belongs to the herpesviridae helicase family. Associates with the primase and the primase-associated factor to form the helicase-primase complex.

It localises to the host nucleus. Functionally, component of the helicase/primase complex. Unwinds the DNA at the replication forks and generates single-stranded DNA for both leading and lagging strand synthesis. The primase synthesizes short RNA primers on the lagging strand that the polymerase elongates using dNTPs. Possesses helicase-like motifs and therefore may act as the helicase subunit of the complex. This is DNA replication helicase from Homo sapiens (Human).